A 138-amino-acid polypeptide reads, in one-letter code: MRTLWIMAVLLVGVDGSLVQLWKMIFQETGKEAAKNYGLYGCNCGVGRRGKPKDATDSCCYVHKCCYKKVTGCNPKMDSYSYSWKNKAIVCGENNPPCLKQVCECDKAVAICLRENLGTYNKKYTIYPKPFCKKADTC.

Residues 1 to 16 (MRTLWIMAVLLVGVDG) form the signal peptide. 7 cysteine pairs are disulfide-bonded: Cys-42–Cys-132, Cys-44–Cys-60, Cys-59–Cys-112, Cys-65–Cys-138, Cys-66–Cys-105, Cys-73–Cys-98, and Cys-91–Cys-103. 2 residues coordinate Ca(2+): Gly-45 and Gly-47. The active site involves His-63. Asp-106 is an active-site residue.

This sequence belongs to the phospholipase A2 family. Group II subfamily. K49 sub-subfamily. Requires Ca(2+) as cofactor. In terms of tissue distribution, expressed by the venom gland.

The protein resides in the secreted. The enzyme catalyses a 1,2-diacyl-sn-glycero-3-phosphocholine + H2O = a 1-acyl-sn-glycero-3-phosphocholine + a fatty acid + H(+). Its function is as follows. Snake venom phospholipase A2 (PLA2) that has low phospholipase A2 activity. Shows anticoagulant activities, strong myolytic activity, infiltration of polymorphonuclear cells, and edema in stromal tissues. Induces cell death of Jurkat cells in a concentration dependent manner. PLA2 catalyzes the calcium-dependent hydrolysis of the 2-acyl groups in 3-sn-phosphoglycerides. The polypeptide is Basic phospholipase A2 BP-III (Protobothrops flavoviridis (Habu)).